A 93-amino-acid polypeptide reads, in one-letter code: Small ribosomal subunit protein uS19 (93 aa).

Belongs to the universal ribosomal protein uS19 family.

Protein S19 forms a complex with S13 that binds strongly to the 16S ribosomal RNA. The chain is Small ribosomal subunit protein uS19 from Frankia casuarinae (strain DSM 45818 / CECT 9043 / HFP020203 / CcI3).